A 399-amino-acid polypeptide reads, in one-letter code: Phosphoglycerate kinase (399 aa).

Residues 24–26 (DLN), Arg-41, 64–67 (HLGR), Arg-123, and Arg-160 each bind substrate. ATP contacts are provided by residues Lys-210, Gly-298, Glu-329, and 355–358 (GGDS).

The protein belongs to the phosphoglycerate kinase family. Monomer.

It localises to the cytoplasm. It catalyses the reaction (2R)-3-phosphoglycerate + ATP = (2R)-3-phospho-glyceroyl phosphate + ADP. It functions in the pathway carbohydrate degradation; glycolysis; pyruvate from D-glyceraldehyde 3-phosphate: step 2/5. The chain is Phosphoglycerate kinase from Salinispora arenicola (strain CNS-205).